We begin with the raw amino-acid sequence, 542 residues long: Protein XP55 (542 aa).

Positions 1–33 (MTARRTRWTRRTDRSLPIRSAAAAVAFAAGATA) are cleaved as a signal peptide. The N-palmitoyl cysteine moiety is linked to residue cysteine 34. Cysteine 34 is lipidated: S-diacylglycerol cysteine. The interval 519-542 (LEGRTNTASPAGPGGTSRTGGRKK) is disordered.

This sequence belongs to the bacterial solute-binding protein 5 family.

The protein resides in the cell membrane. Required for transport of an unidentified substrate. In Streptomyces lividans, this protein is Protein XP55 (xp55).